We begin with the raw amino-acid sequence, 448 residues long: Death-associated protein kinase 3 (448 aa).

A Protein kinase domain is found at 13–275; the sequence is YEMGEELGSG…IAQSLEHSWI (263 aa). ATP contacts are provided by residues 19–27 and Lys42; that span reads LGSGQFAIV. Residue Asp139 is the Proton acceptor of the active site. The activation segment stretch occupies residues 161 to 204; sequence DFGIAHRIEAGSEFKNIFGTPEFVAPEIVNYEPLGLEADMWSIG. Phosphothreonine occurs at positions 180 and 225. Position 265 is a phosphothreonine; by autocatalysis (Thr265). A Phosphothreonine; by ROCK1 modification is found at Thr265. Residue Ser304 is modified to Phosphoserine; by DAPK1. Ser306 carries the phosphoserine; by autocatalysis and DAPK1 modification. Residues Ser307, Ser313, and Ser321 each carry the phosphoserine; by DAPK1 modification. The tract at residues 390 to 448 is interaction with CDC5L; it reads AQEEARAALLGAGGLKRRLCRLENRYDALAAQVAAEVQFVRDLVRALEQERLQAECGVR. Positions 422-436 are leucine-zipper; that stretch reads VAAEVQFVRDLVRAL.

The protein belongs to the protein kinase superfamily. CAMK Ser/Thr protein kinase family. DAP kinase subfamily. In terms of assembly, homooligomer in its kinase-active form (homotrimers and homodimers are reported); monomeric in its kinase-inactive form. Homodimerization is required for activation segment autophosphorylation. Interacts with DAXX, PAWR, ATF4, NLK, TCF7L2, UBE2D1, UBE2D2, UBE2D3, and CDC5L. Interacts with AR; enhanced by AATF. Interacts with LUZP1; the interaction is likely to occur throughout the cell cycle and reduces the LUZP1-mediated suppression of MYL9 phosphorylation. Mg(2+) is required as a cofactor. Ubiquitinated. Ubiquitination mediated by the UBE2D3 E3 ligase does not lead to proteasomal degradation, but influences promyelocytic leukemia protein nuclear bodies (PML-NBs) formation in the nucleus. In terms of processing, the phosphorylation status is critical for kinase activity, oligomerization and intracellular localization. Phosphorylation at Thr-180, Thr-225 and Thr-265 is essential for activity. The phosphorylated form is localized in the cytoplasm and nuclear translocation or retention is maximal when it is not phosphorylated. Phosphorylation increases the trimeric form, and its dephosphorylation favors a kinase-inactive monomeric form. As to expression, highly expressed in heart, brain, lung, skeletal muscle, kidney and testis. Lower levels in liver and spleen.

Its subcellular location is the nucleus. The protein localises to the PML body. It is found in the cytoplasm. The protein resides in the cytoskeleton. It localises to the microtubule organizing center. Its subcellular location is the centrosome. The protein localises to the chromosome. It is found in the centromere. The protein resides in the spindle. It localises to the midbody. It carries out the reaction L-seryl-[protein] + ATP = O-phospho-L-seryl-[protein] + ADP + H(+). It catalyses the reaction L-threonyl-[protein] + ATP = O-phospho-L-threonyl-[protein] + ADP + H(+). A sequential activation is proposed: autophosphorylation at consensus sites is leading to dimerization of the catalytic domain and activation segment exchange (producing an active confirmation of both kinase modules in trans) followed by phosphorylation at Thr-180 in the activation segment and at other regulatory sites. Phosphorylation at Thr-180, Thr-225 and Thr-265 is essential for activity. Inhibited by pyridone 6 (K00225), a potent, ATP-competitive inhibitor. Phosphorylation at Thr-180, Thr-225 and Thr-265 is essential for activity. Its function is as follows. Serine/threonine kinase which is involved in the regulation of apoptosis, autophagy, transcription, translation and actin cytoskeleton reorganization. Regulates both type I (caspase-dependent) apoptotic and type II (caspase-independent) autophagic cell deaths signal, depending on the cellular setting. Involved in formation of promyelocytic leukemia protein nuclear body (PML-NB). Involved in apoptosis involving PAWR which mediates cytoplasmic relocation; in vitro phosphorylates PAWR. Regulates myosin phosphorylation in both smooth muscle and non-muscle cells. In smooth muscle, regulates myosin either directly by phosphorylating MYL12B and MYL9 or through inhibition of smooth muscle myosin phosphatase (SMPP1M) via phosphorylation of PPP1R12A; the inhibition of SMPP1M functions to enhance muscle responsiveness to Ca(2+) and promote a contractile state. Phosphorylates MYL12B in non-muscle cells leading to reorganization of actin cytoskeleton such as in regulation of cell polarity and cell migration. Positively regulates canonical Wnt/beta-catenin signaling through interaction with NLK and TCF7L2; disrupts the NLK-TCF7L2 complex thereby influencing the phosphorylation of TCF7L2 by NLK. Phosphorylates STAT3 and enhances its transcriptional activity. Enhances transcription from AR-responsive promoters in a hormone- and kinase-dependent manner. Phosphorylates histone H3 on 'Thr-11' at centromeres during mitosis. Phosphorylates RPL13A on 'Ser-77' upon interferon-gamma activation which is causing RPL13A release from the ribosome, RPL13A association with the GAIT complex and its subsequent involvement in transcript-selective translation inhibition. This Mus musculus (Mouse) protein is Death-associated protein kinase 3 (Dapk3).